We begin with the raw amino-acid sequence, 194 residues long: MKIFFIDNFDSFSYNLVYELECLGYEVAVYQNDIDPSYLMGLMNEEPKTPLLFISPGPGNPNSSGNLLKIIAMAKKKFPILGVCLGLQALAQSYGAKIIRSKEIVHGKATTIALKKHAVFKGLGESMVVGRYHSLMASGLPKNLEVIAEHDNIPMAIVNEEDKILAYQFHPESIMTLQGRALLEQSVGFLRELS.

Residues 2-194 (KIFFIDNFDS…QSVGFLRELS (193 aa)) enclose the Glutamine amidotransferase type-1 domain. 57-59 (GPG) contacts L-glutamine. Catalysis depends on cysteine 84, which acts as the Nucleophile; for GATase activity. L-glutamine is bound by residues glutamine 88 and 134 to 135 (SL). Residues histidine 170 and glutamate 172 each act as for GATase activity in the active site.

Heterotetramer consisting of two non-identical subunits: a beta subunit (TrpG) and a large alpha subunit (TrpE).

It catalyses the reaction chorismate + L-glutamine = anthranilate + pyruvate + L-glutamate + H(+). It functions in the pathway amino-acid biosynthesis; L-tryptophan biosynthesis; L-tryptophan from chorismate: step 1/5. In terms of biological role, part of a heterotetrameric complex that catalyzes the two-step biosynthesis of anthranilate, an intermediate in the biosynthesis of L-tryptophan. In the first step, the glutamine-binding beta subunit (TrpG) of anthranilate synthase (AS) provides the glutamine amidotransferase activity which generates ammonia as a substrate that, along with chorismate, is used in the second step, catalyzed by the large alpha subunit of AS (TrpE) to produce anthranilate. In the absence of TrpG, TrpE can synthesize anthranilate directly from chorismate and high concentrations of ammonia. The protein is Anthranilate synthase component 2 (trpG) of Helicobacter pylori (strain J99 / ATCC 700824) (Campylobacter pylori J99).